A 674-amino-acid chain; its full sequence is Probable L-type lectin-domain containing receptor kinase II.1 (674 aa).

Residues 1–24 (MAGVLGSVVFWLIIGIHVTFLVFA) form the signal peptide. Over 25–301 (QEGDHFVYYD…PSPKRFPLKE (277 aa)) the chain is Extracellular. The legume-lectin like stretch occupies residues 28 to 274 (DHFVYYDFRN…NQYILGWSFK (247 aa)). Asn-57, Asn-117, Asn-133, Asn-185, Asn-210, and Asn-242 each carry an N-linked (GlcNAc...) asparagine glycan. A helical transmembrane segment spans residues 302–322 (VLGATISTIAFLTLGGIVYLY). Residues 323–674 (KKKKYAEVLE…EDVTVLFGGR (352 aa)) lie on the Cytoplasmic side of the membrane. The region spanning 355–633 (FRENQLLGAG…LEGNVSVPAI (279 aa)) is the Protein kinase domain. ATP-binding positions include 361–369 (LGAGGFGKV) and Lys-383. Residue Asp-480 is the Proton acceptor of the active site.

The protein in the C-terminal section; belongs to the protein kinase superfamily. Ser/Thr protein kinase family. This sequence in the N-terminal section; belongs to the leguminous lectin family.

The protein localises to the cell membrane. It carries out the reaction L-seryl-[protein] + ATP = O-phospho-L-seryl-[protein] + ADP + H(+). The catalysed reaction is L-threonyl-[protein] + ATP = O-phospho-L-threonyl-[protein] + ADP + H(+). The polypeptide is Probable L-type lectin-domain containing receptor kinase II.1 (LECRK21) (Arabidopsis thaliana (Mouse-ear cress)).